The chain runs to 296 residues: MYGWINIDKPCGISSASVVSRVKKILNVKKVGYAGTLDPLASGILPIAIGEATKLMPYAVDVQKSYIFTVQWGEQRTTDDASGEIIKKSNIVPHFEEINKIIPNFIGMIEQVPPNFSAIHVDGVRAFKLARNGQEFELSSRYVNVVRLKLLSFSRENNTADFYLLCKKGVYVRSIARDLGIRLGCFGYVAKLRRVRVGYFKQKNAITLDKLKILHNNGDTHKYLLPLWYVLQDIKHLDDVFCSVEISKIKNGQNIQLNNLYMVKNCDMCYVSTHSVPVAICSIANNVIKPVRVFNV.

Residue aspartate 38 is the Nucleophile of the active site.

It belongs to the pseudouridine synthase TruB family. Type 1 subfamily.

The enzyme catalyses uridine(55) in tRNA = pseudouridine(55) in tRNA. Responsible for synthesis of pseudouridine from uracil-55 in the psi GC loop of transfer RNAs. This chain is tRNA pseudouridine synthase B, found in Ehrlichia ruminantium (strain Gardel).